Reading from the N-terminus, the 424-residue chain is Glutamate-1-semialdehyde 2,1-aminomutase (424 aa).

K266 bears the N6-(pyridoxal phosphate)lysine mark.

This sequence belongs to the class-III pyridoxal-phosphate-dependent aminotransferase family. HemL subfamily. In terms of assembly, homodimer. Pyridoxal 5'-phosphate is required as a cofactor.

It localises to the cytoplasm. It carries out the reaction (S)-4-amino-5-oxopentanoate = 5-aminolevulinate. It functions in the pathway porphyrin-containing compound metabolism; protoporphyrin-IX biosynthesis; 5-aminolevulinate from L-glutamyl-tRNA(Glu): step 2/2. The polypeptide is Glutamate-1-semialdehyde 2,1-aminomutase (Thermus thermophilus (strain ATCC 27634 / DSM 579 / HB8)).